The following is a 1114-amino-acid chain: Extracellular sulfatase SULF-1 homolog (1114 aa).

The first 25 residues, 1-25 (MMRHSSLRLIIGGLILLLFVLNVFS), serve as a signal peptide directing secretion. Positions 62, 63, and 98 each coordinate Ca(2+). Catalysis depends on Cys98, which acts as the Nucleophile. At Cys98 the chain carries 3-oxoalanine (Cys). N-linked (GlcNAc...) asparagine glycans are attached at residues Asn122, Asn159, Asn181, Asn208, and Asn251. 2 residues coordinate Ca(2+): Asp327 and His328. Asn447 carries N-linked (GlcNAc...) asparagine glycosylation. Over residues 466–479 (SSSSTAATLMSSTA) the composition is skewed to low complexity. The interval 466–504 (SSSSTAATLMSSTAQQPEDGEEEVETDNEEDDVDGDGAM) is disordered. The span at 483–502 (EDGEEEVETDNEEDDVDGDG) shows a compositional bias: acidic residues. Residues Asn683, Asn713, and Asn743 are each glycosylated (N-linked (GlcNAc...) asparagine). The interval 781–812 (KQLRESNKQALAAGRRNDNRRRNDQSVLDSGA) is disordered. A compositionally biased stretch (basic and acidic residues) spans 795–804 (RRNDNRRRND). Asn817 carries an N-linked (GlcNAc...) asparagine glycan. Residues 876–895 (ADSKEMAREARRKLKEERQR) are compositionally biased toward basic and acidic residues. The disordered stretch occupies residues 876–901 (ADSKEMAREARRKLKEERQRKKERKR). Residues Asn945, Asn955, and Asn974 are each glycosylated (N-linked (GlcNAc...) asparagine). Residues 1073-1114 (LSKYNRLTGSQQSHMKRRPWKQTPLQQSPRFLRTHSVTPAQA) are disordered. The span at 1095–1114 (TPLQQSPRFLRTHSVTPAQA) shows a compositional bias: polar residues.

Belongs to the sulfatase family. Requires Ca(2+) as cofactor. The conversion to 3-oxoalanine (also known as C-formylglycine, FGly), of a serine or cysteine residue in prokaryotes and of a cysteine residue in eukaryotes, is critical for catalytic activity.

It is found in the endoplasmic reticulum. The protein resides in the golgi apparatus. Its subcellular location is the golgi stack. It localises to the cell surface. The chain is Extracellular sulfatase SULF-1 homolog (Sulf1) from Drosophila melanogaster (Fruit fly).